Consider the following 155-residue polypeptide: Ciliary microtubule inner protein 2C (155 aa).

This sequence belongs to the CIMIP2 family.

It localises to the cytoplasm. It is found in the cytoskeleton. Its subcellular location is the cilium axoneme. Its function is as follows. Microtubule inner protein (MIP) part of the dynein-decorated doublet microtubules (DMTs) in cilia axoneme, which is required for motile cilia beating. The sequence is that of Ciliary microtubule inner protein 2C (cimip2c) from Xenopus tropicalis (Western clawed frog).